A 589-amino-acid chain; its full sequence is Cysteine/serine-rich nuclear protein 1 (589 aa).

Disordered regions lie at residues 1 to 62 and 309 to 388; these read MTGL…RDFC and FREL…GVDD. Composition is skewed to low complexity over residues 17 to 41 and 345 to 368; these read SSVS…SVSR and DNSC…TSEA.

It belongs to the AXUD1 family. As to expression, ubiquitous. Most abundantly expressed in lung, placenta, skeletal muscle, pancreas and leukocyte. Frequently down-regulated in lung, kidney, liver and colon cancers compared with their corresponding normal tissues.

The protein localises to the nucleus. In terms of biological role, binds to the consensus sequence 5'-AGAGTG-3' and has transcriptional activator activity. May have a tumor-suppressor function. May play a role in apoptosis. The protein is Cysteine/serine-rich nuclear protein 1 (CSRNP1) of Homo sapiens (Human).